The following is a 336-amino-acid chain: Holliday junction branch migration complex subunit RuvB (336 aa).

Residues 4–184 (SDRLISSQSI…FGIVQRLEYY (181 aa)) are large ATPase domain (RuvB-L). ATP is bound by residues isoleucine 23, arginine 24, glycine 65, lysine 68, threonine 69, threonine 70, 131–133 (EDY), arginine 174, tyrosine 184, and arginine 221. Threonine 69 is a binding site for Mg(2+). The segment at 185–255 (SVDSLTQIVA…MAQQALEMLE (71 aa)) is small ATPAse domain (RuvB-S). The head domain (RuvB-H) stretch occupies residues 258–336 (QHGFDLMDRK…HFGFSAIEQE (79 aa)). DNA contacts are provided by arginine 313 and arginine 318.

This sequence belongs to the RuvB family. In terms of assembly, homohexamer. Forms an RuvA(8)-RuvB(12)-Holliday junction (HJ) complex. HJ DNA is sandwiched between 2 RuvA tetramers; dsDNA enters through RuvA and exits via RuvB. An RuvB hexamer assembles on each DNA strand where it exits the tetramer. Each RuvB hexamer is contacted by two RuvA subunits (via domain III) on 2 adjacent RuvB subunits; this complex drives branch migration. In the full resolvosome a probable DNA-RuvA(4)-RuvB(12)-RuvC(2) complex forms which resolves the HJ.

It localises to the cytoplasm. It carries out the reaction ATP + H2O = ADP + phosphate + H(+). In terms of biological role, the RuvA-RuvB-RuvC complex processes Holliday junction (HJ) DNA during genetic recombination and DNA repair, while the RuvA-RuvB complex plays an important role in the rescue of blocked DNA replication forks via replication fork reversal (RFR). RuvA specifically binds to HJ cruciform DNA, conferring on it an open structure. The RuvB hexamer acts as an ATP-dependent pump, pulling dsDNA into and through the RuvAB complex. RuvB forms 2 homohexamers on either side of HJ DNA bound by 1 or 2 RuvA tetramers; 4 subunits per hexamer contact DNA at a time. Coordinated motions by a converter formed by DNA-disengaged RuvB subunits stimulates ATP hydrolysis and nucleotide exchange. Immobilization of the converter enables RuvB to convert the ATP-contained energy into a lever motion, pulling 2 nucleotides of DNA out of the RuvA tetramer per ATP hydrolyzed, thus driving DNA branch migration. The RuvB motors rotate together with the DNA substrate, which together with the progressing nucleotide cycle form the mechanistic basis for DNA recombination by continuous HJ branch migration. Branch migration allows RuvC to scan DNA until it finds its consensus sequence, where it cleaves and resolves cruciform DNA. The protein is Holliday junction branch migration complex subunit RuvB of Legionella pneumophila (strain Lens).